The sequence spans 162 residues: Shikimate kinase (162 aa).

An ATP-binding site is contributed by 11 to 16 (GSGKSS). Residue Ser15 participates in Mg(2+) binding. Residues Asp33, Arg57, and Gly80 each contribute to the substrate site. Arg116 contacts ATP. Residue Arg132 coordinates substrate.

This sequence belongs to the shikimate kinase family. Monomer. Mg(2+) is required as a cofactor.

Its subcellular location is the cytoplasm. The enzyme catalyses shikimate + ATP = 3-phosphoshikimate + ADP + H(+). The protein operates within metabolic intermediate biosynthesis; chorismate biosynthesis; chorismate from D-erythrose 4-phosphate and phosphoenolpyruvate: step 5/7. Its function is as follows. Catalyzes the specific phosphorylation of the 3-hydroxyl group of shikimic acid using ATP as a cosubstrate. The polypeptide is Shikimate kinase (Helicobacter pylori (strain G27)).